The primary structure comprises 560 residues: DNA ligase B (560 aa).

The N6-AMP-lysine intermediate role is filled by K124.

It belongs to the NAD-dependent DNA ligase family. LigB subfamily.

It catalyses the reaction NAD(+) + (deoxyribonucleotide)n-3'-hydroxyl + 5'-phospho-(deoxyribonucleotide)m = (deoxyribonucleotide)n+m + AMP + beta-nicotinamide D-nucleotide.. Functionally, catalyzes the formation of phosphodiester linkages between 5'-phosphoryl and 3'-hydroxyl groups in double-stranded DNA using NAD as a coenzyme and as the energy source for the reaction. The chain is DNA ligase B from Shigella flexneri serotype 5b (strain 8401).